The primary structure comprises 391 residues: Phosphoglycerate kinase (391 aa).

Residues 21–23 (DMN), Arg-36, 59–62 (HLGR), Arg-113, and Arg-146 contribute to the substrate site. Residues Lys-197, Glu-319, and 345-348 (GGDT) contribute to the ATP site.

The protein belongs to the phosphoglycerate kinase family. As to quaternary structure, monomer.

The protein localises to the cytoplasm. The enzyme catalyses (2R)-3-phosphoglycerate + ATP = (2R)-3-phospho-glyceroyl phosphate + ADP. The protein operates within carbohydrate degradation; glycolysis; pyruvate from D-glyceraldehyde 3-phosphate: step 2/5. The sequence is that of Phosphoglycerate kinase from Chromobacterium violaceum (strain ATCC 12472 / DSM 30191 / JCM 1249 / CCUG 213 / NBRC 12614 / NCIMB 9131 / NCTC 9757 / MK).